A 135-amino-acid polypeptide reads, in one-letter code: MASGGGGGSKRCPKKQPTPEELAEELVKLRMENKALKSKLKEHVGDDDVVLTQAAKEAMVGSVVSGLTRSAAKQIEERIRKETLKATTKNEFEEVIKTLSFRVSLSYADLGGRASSDSSKASKPRGRSKHRAEKQ.

Disordered stretches follow at residues 1-20 (MASG…PTPE) and 110-135 (LGGR…AEKQ). Over residues 122-135 (SKPRGRSKHRAEKQ) the composition is skewed to basic residues.

It belongs to the herpesviridae BLRF2 family.

The protein is Gene 52 protein (52) of Equine herpesvirus 2 (strain 86/87) (EHV-2).